Consider the following 68-residue polypeptide: UPF0352 protein CPS_2611 (68 aa).

It belongs to the UPF0352 family.

The protein is UPF0352 protein CPS_2611 of Colwellia psychrerythraea (strain 34H / ATCC BAA-681) (Vibrio psychroerythus).